A 481-amino-acid chain; its full sequence is 4-hydroxyphenylacetate 3-monooxygenase oxygenase component (481 aa).

Substrate is bound by residues 100 to 104 (RSPDY) and histidine 142. Residues 142 to 144 (HAL), 148 to 151 (QVNR), and threonine 185 contribute to the FAD site. 197 to 198 (ST) serves as a coordination point for substrate. 444–447 (DPVR) contacts FAD.

Belongs to the FADH(2)-utilizing monooxygenase family. Homotetramer consisting of a dimer of dimers. 4-HPA 3-monooxygenase consists of a reductase component HpaC and an oxygenase component HpaB.

It carries out the reaction 4-hydroxyphenylacetate + FADH2 + O2 = 3,4-dihydroxyphenylacetate + FAD + H2O + H(+). The protein operates within aromatic compound metabolism; 4-hydroxyphenylacetate degradation; pyruvate and succinate semialdehyde from 4-hydroxyphenylacetate: step 1/7. Functionally, utilizes FADH(2) supplied by HpaC, to catalyze the hydroxylation of 4-hydroxyphenylacetic acid, leading to the production of 3,4-dihydroxyphenylacetic acid (DHPA). In Thermus thermophilus (strain ATCC 27634 / DSM 579 / HB8), this protein is 4-hydroxyphenylacetate 3-monooxygenase oxygenase component.